The following is a 437-amino-acid chain: Dolichyl-diphosphooligosaccharide--protein glycosyltransferase 48 kDa subunit (437 aa).

The N-terminal stretch at 1–24 (MASLRVSVLLVAASCLLLGSGLRA) is a signal peptide. The Lumenal portion of the chain corresponds to 25–407 (GPRTLVLLEN…QYERFIPSAY (383 aa)). A helical membrane pass occupies residues 408–428 (PYYASAFSVMFGLFIFSIVFL). At 429-437 (HMKEKEKSD) the chain is on the cytoplasmic side.

Belongs to the DDOST 48 kDa subunit family. In terms of assembly, component of the oligosaccharyltransferase (OST) complex.

It localises to the endoplasmic reticulum membrane. Its pathway is protein modification; protein glycosylation. In terms of biological role, subunit of the oligosaccharyl transferase (OST) complex that catalyzes the initial transfer of a defined glycan (Glc(3)Man(9)GlcNAc(2) in eukaryotes) from the lipid carrier dolichol-pyrophosphate to an asparagine residue within an Asn-X-Ser/Thr consensus motif in nascent polypeptide chains, the first step in protein N-glycosylation. N-glycosylation occurs cotranslationally and the complex associates with the Sec61 complex at the channel-forming translocon complex that mediates protein translocation across the endoplasmic reticulum (ER). All subunits are required for a maximal enzyme activity. Required for the assembly of both SST3A- and SS3B-containing OST complexes. The chain is Dolichyl-diphosphooligosaccharide--protein glycosyltransferase 48 kDa subunit from Xenopus tropicalis (Western clawed frog).